Consider the following 293-residue polypeptide: Acetyl-coenzyme A carboxylase carboxyl transferase subunit beta (293 aa).

The region spanning 29-293 is the CoA carboxyltransferase N-terminal domain; the sequence is LWVKCSECSQ…GVKELAEANT (265 aa). 4 residues coordinate Zn(2+): C33, C36, C52, and C55. The segment at 33-55 adopts a C4-type zinc-finger fold; the sequence is CSECSQVAYRKDLISNFNVCSNC.

It belongs to the AccD/PCCB family. In terms of assembly, acetyl-CoA carboxylase is a heterohexamer composed of biotin carboxyl carrier protein (AccB), biotin carboxylase (AccC) and two subunits each of ACCase subunit alpha (AccA) and ACCase subunit beta (AccD). Requires Zn(2+) as cofactor.

The protein resides in the cytoplasm. It catalyses the reaction N(6)-carboxybiotinyl-L-lysyl-[protein] + acetyl-CoA = N(6)-biotinyl-L-lysyl-[protein] + malonyl-CoA. Its pathway is lipid metabolism; malonyl-CoA biosynthesis; malonyl-CoA from acetyl-CoA: step 1/1. In terms of biological role, component of the acetyl coenzyme A carboxylase (ACC) complex. Biotin carboxylase (BC) catalyzes the carboxylation of biotin on its carrier protein (BCCP) and then the CO(2) group is transferred by the transcarboxylase to acetyl-CoA to form malonyl-CoA. This is Acetyl-coenzyme A carboxylase carboxyl transferase subunit beta from Prochlorococcus marinus (strain MIT 9301).